Reading from the N-terminus, the 431-residue chain is Tol-Pal system protein TolB (431 aa).

A signal peptide spans 1–19; the sequence is MKRLLFFLICVFFSKTSYS.

This sequence belongs to the TolB family. The Tol-Pal system is composed of five core proteins: the inner membrane proteins TolA, TolQ and TolR, the periplasmic protein TolB and the outer membrane protein Pal. They form a network linking the inner and outer membranes and the peptidoglycan layer.

Its subcellular location is the periplasm. Its function is as follows. Part of the Tol-Pal system, which plays a role in outer membrane invagination during cell division and is important for maintaining outer membrane integrity. TolB occupies a key intermediary position in the Tol-Pal system because it communicates directly with both membrane-embedded components, Pal in the outer membrane and TolA in the inner membrane. In Wigglesworthia glossinidia brevipalpis, this protein is Tol-Pal system protein TolB.